Here is a 312-residue protein sequence, read N- to C-terminus: tRNA dimethylallyltransferase (312 aa).

An ATP-binding site is contributed by 17–24 (GPTASGKT). A substrate-binding site is contributed by 19–24 (TASGKT). 3 interaction with substrate tRNA regions span residues 42–45 (DSAL), 166–170 (QRLLR), and 247–252 (RCVGYR).

Belongs to the IPP transferase family. In terms of assembly, monomer. It depends on Mg(2+) as a cofactor.

The enzyme catalyses adenosine(37) in tRNA + dimethylallyl diphosphate = N(6)-dimethylallyladenosine(37) in tRNA + diphosphate. In terms of biological role, catalyzes the transfer of a dimethylallyl group onto the adenine at position 37 in tRNAs that read codons beginning with uridine, leading to the formation of N6-(dimethylallyl)adenosine (i(6)A). The chain is tRNA dimethylallyltransferase from Sodalis glossinidius (strain morsitans).